A 222-amino-acid chain; its full sequence is Probable translocation protein y4yL (222 aa).

4 helical membrane-spanning segments follow: residues 6-26 (PAILALLAITAALGLLVLAVV), 52-72 (PNIVLYAAALILTMFVSAPVA), 158-178 (IGFLLYLPFIVIDLIVTTILM), and 182-202 (MSMVSPTIIAVPFKLFLFVAI).

This sequence belongs to the FliP/MopC/SpaP family.

The protein resides in the cell membrane. Could be involved in the secretion of an unknown factor. This is Probable translocation protein y4yL from Sinorhizobium fredii (strain NBRC 101917 / NGR234).